A 457-amino-acid polypeptide reads, in one-letter code: Dihydrolipoyl dehydrogenase (457 aa).

Residues Glu32–Cys40, Lys49, and Ala113 each bind FAD. A disulfide bond links Cys40 and Cys45. NAD(+) is bound by residues Gly178–Ile182, Val235, and Ser262–Arg265. Residues Asp303 and Ala311 each coordinate FAD. The active-site Proton acceptor is His437.

This sequence belongs to the class-I pyridine nucleotide-disulfide oxidoreductase family. Homodimer. The cofactor is FAD.

The protein localises to the cytoplasm. The enzyme catalyses N(6)-[(R)-dihydrolipoyl]-L-lysyl-[protein] + NAD(+) = N(6)-[(R)-lipoyl]-L-lysyl-[protein] + NADH + H(+). In terms of biological role, lipoamide dehydrogenase is a component of the alpha-ketoacid dehydrogenase complexes. The protein is Dihydrolipoyl dehydrogenase (pdhD) of Mycoplasma pneumoniae (strain ATCC 29342 / M129 / Subtype 1) (Mycoplasmoides pneumoniae).